The following is a 567-amino-acid chain: UPF0313 protein Tpet_0582 (567 aa).

One can recognise a Radical SAM core domain in the interval 288–560 (KAIETVKFSI…NKMKENVLFK (273 aa)). [4Fe-4S] cluster contacts are provided by Cys303, Cys307, and Cys310.

This sequence belongs to the UPF0313 family. [4Fe-4S] cluster serves as cofactor.

This Thermotoga petrophila (strain ATCC BAA-488 / DSM 13995 / JCM 10881 / RKU-1) protein is UPF0313 protein Tpet_0582.